The sequence spans 468 residues: Nuclear receptor ROR-alpha A (468 aa).

Positions 15-90 form a DNA-binding region, nuclear receptor; it reads IIPCKICGDK…VGMSRDAVKF (76 aa). NR C4-type zinc fingers lie at residues 18–38 and 54–73; these read CKICGDKSSGIHYGVITCEGC and CPRQKNCLIDRTSRNRCQHC. Disordered stretches follow at residues 101-129 and 142-163; these read LYAEVQKHRLQQQQRDHQQQPGEAEPLTP and HDDLSGYMNGHTPDGTKPDSGV. The region spanning 217-455 is the NR LBD domain; it reads ELEHLAQNIS…AHFPPLYKEL (239 aa). Positions 444–455 are AF-2; sequence VRAHFPPLYKEL.

This sequence belongs to the nuclear hormone receptor family. NR1 subfamily. As to expression, expressed in the brain, in cerebellar-like structures, including Purkinje cells.

Its subcellular location is the nucleus. Nuclear receptor that binds DNA as a monomer to ROR response elements (RORE). Required for proper cerebellum development. The protein is Nuclear receptor ROR-alpha A (roraa) of Danio rerio (Zebrafish).